We begin with the raw amino-acid sequence, 541 residues long: GTPase Obg (541 aa).

In terms of domain architecture, Obg spans 2-159 (PTFVDRVVLH…LDAVLELKSV (158 aa)). The segment at 63 to 84 (HPHQRAGGGRPGQGSNRHGADG) is disordered. The 173-residue stretch at 160-332 (ADVALVGFPS…LALALAELVA (173 aa)) folds into the OBG-type G domain. GTP is bound by residues 166-173 (GFPSAGKS), 191-195 (FTTLV), 213-216 (DVPG), 284-287 (NKVD), and 313-315 (STA). Serine 173 and threonine 193 together coordinate Mg(2+). Residues 350 to 427 (PRAVDEPDFT…IGAVTFDWEP (78 aa)) enclose the OCT domain. Residues 497-541 (KRLTRAQRTALSDSADDFDDGAGFSDSAAFGDSGGSGGDADGGRG) form a disordered region. Residues 517–527 (GAGFSDSAAFG) show a composition bias toward low complexity. Residues 528 to 541 (DSGGSGGDADGGRG) show a composition bias toward gly residues.

This sequence belongs to the TRAFAC class OBG-HflX-like GTPase superfamily. OBG GTPase family. Monomer. Mg(2+) is required as a cofactor.

It is found in the cytoplasm. In terms of biological role, an essential GTPase which binds GTP, GDP and possibly (p)ppGpp with moderate affinity, with high nucleotide exchange rates and a fairly low GTP hydrolysis rate. Plays a role in control of the cell cycle, stress response, ribosome biogenesis and in those bacteria that undergo differentiation, in morphogenesis control. This is GTPase Obg from Parafrankia sp. (strain EAN1pec).